A 71-amino-acid polypeptide reads, in one-letter code: Small ribosomal subunit protein bS21 (71 aa).

The protein belongs to the bacterial ribosomal protein bS21 family.

The protein is Small ribosomal subunit protein bS21 of Shewanella sp. (strain MR-4).